Reading from the N-terminus, the 284-residue chain is uncharacterized protein (284 aa).

Residues 1–24 (MLYSRESRTTVLFLALVTSLTVLC) form the signal peptide. Residues 25–84 (HSVDVTTVFTTSTITEITTVTAAPQPQNKAETALNTATNIIQTMQFLFNCAPFKWKGPLK) lie on the Cytoplasmic side of the membrane. Residues 85-104 (ITSCALNFIVLLLTAWGYLL) traverse the membrane as a helical segment. At 105 to 284 (KYLQENKLNS…SVHMYSSSLL (180 aa)) the chain is on the extracellular side. An N-linked (GlcNAc...) asparagine glycan is attached at Asn270.

It to yeast YNL033w.

Its subcellular location is the cell membrane. This is an uncharacterized protein from Saccharomyces cerevisiae (strain ATCC 204508 / S288c) (Baker's yeast).